The chain runs to 436 residues: MDVADPEPLGLFSEGELMSVGMDTFIHRIDSTEVIYQPRRKRAKLIGKYLMGDLLGEGSYGKVKEVLDSETLCRRAVKILKKKKLRRIPNGEANVKKEIQLLRRLRHRNVIQLVDVLYNEEKQKMYMVMEYCVCGMQEMLDSVPEKRFPVCQAHGYFRQLIDGLEYLHSQGIVHKDIKPGNLLLTTNGTLKISDLGVAEALHPFAVDDTCRTSQGSPAFQPPEIANGLDTFSGFKVDIWSAGVTLYNITTGLYPFEGDNIYKLFENIGRGDFTIPCDCGPPLSDLLRGMLEYEPAKRFSIRQIRQHSWFRKKHPLAEALVPIPPSPDTKDRWRSMTVVPYLEDLHGRAEEEEEEDLFDIEDGIIYTQDFTVPGQVLEEEVGQNGQSHSLPKAVCVNGTEPQLSSKVKPEGRPGTANPARKVCSSNKIRRLSACKQQ.

The residue at position 31 (Ser31) is a Phosphoserine. Lys44 and Lys48 each carry N6-acetyllysine. The sufficient for interaction with SIRT1 stretch occupies residues 45 to 90; sequence LIGKYLMGDLLGEGSYGKVKEVLDSETLCRRAVKILKKKKLRRIPN. The region spanning 49-309 is the Protein kinase domain; the sequence is YLMGDLLGEG…IRQIRQHSWF (261 aa). ATP-binding positions include 55 to 63 and Lys78; that span reads LGEGSYGKV. Residues Lys96 and Lys97 each carry the N6-acetyllysine modification. Asp176 (proton acceptor) is an active-site residue. The residue at position 189 (Thr189) is a Phosphothreonine; by autocatalysis. 2 positions are modified to N6-acetyllysine: Lys296 and Lys311. Residue Ser325 is modified to Phosphoserine. The residue at position 336 (Thr336) is a Phosphothreonine; by autocatalysis. Thr366 bears the Phosphothreonine; by ATM and autocatalysis mark. Residues 398–421 are disordered; the sequence is TEPQLSSKVKPEGRPGTANPARKV. Position 403 is a phosphoserine (Ser403). Position 420 is an N6-acetyllysine (Lys420). Residue Cys422 is the site of S-palmitoyl cysteine attachment. Residue Lys426 is modified to N6-acetyllysine. Position 431 is a phosphoserine; by autocatalysis, PKA, PKC/PRKCZ and RPS6KA1 (Ser431). Residue Cys433 is modified to Cysteine methyl ester. The S-farnesyl cysteine moiety is linked to residue Cys433. Residue Lys434 is modified to N6-acetyllysine. Positions 434-436 are cleaved as a propeptide — removed in mature form; it reads KQQ.

The protein belongs to the protein kinase superfamily. CAMK Ser/Thr protein kinase family. LKB1 subfamily. As to quaternary structure, catalytic component of a trimeric complex composed of STK11/LKB1, STRAD (STRADA or STRADB) and CAB39/MO25 (CAB39/MO25alpha or CAB39L/MO25beta): the complex tethers STK11/LKB1 in the cytoplasm and stimulates its catalytic activity. Found in a ternary complex composed of SMAD4, STK11/LKB1 and STK11IP. Interacts with p53/TP53, SMAD4, STK11IP and WDR6. Interacts with NR4A1. Interacts with NISCH; this interaction may increase STK11 activity. Interacts with PTEN, leading to PTEN phosphorylation. Interacts with SIRT1; the interaction deacetylates STK11. Interacts with CDKN1A. Requires Mg(2+) as cofactor. Mn(2+) is required as a cofactor. In terms of processing, phosphorylated by ATM at Thr-366 following ionizing radiation (IR). Phosphorylation at Ser-431 by RPS6KA1 and/or some PKA is required to inhibit cell growth. Phosphorylation at Ser-431 is also required during neuronal polarization to mediate phosphorylation of BRSK1 and BRSK2. Phosphorylation by PKC/PRKCZ at Ser-399 in isoform 2 promotes metformin (or peroxynitrite)-induced nuclear export of STK11 and activation of AMPK. UV radiation-induced phosphorylation at Thr-366 mediates CDKN1A degradation. Post-translationally, acetylated. Deacetylation at Lys-48 enhances cytoplasmic localization and kinase activity in vitro. Widely expressed. As to expression, predominantly expressed in testis (at protein level). In terms of tissue distribution, expressed in adult brain and liver and absent from tissues derived from postnatal day 7.

The protein resides in the nucleus. Its subcellular location is the cytoplasm. It is found in the membrane. It localises to the mitochondrion. The catalysed reaction is L-seryl-[protein] + ATP = O-phospho-L-seryl-[protein] + ADP + H(+). The enzyme catalyses L-threonyl-[protein] + ATP = O-phospho-L-threonyl-[protein] + ADP + H(+). Its activity is regulated as follows. Activated by forming a complex with STRAD (STRADA or STRADB) and CAB39/MO25 (CAB39/MO25alpha or CAB39L/MO25beta): STRADA (or STRADB)-binding promotes a conformational change of STK11/LKB1 in an active conformation, which is stabilized by CAB39/MO25alpha (or CAB39L/MO25beta) interacting with the STK11/LKB1 activation loop. Sequestration in the nucleus by NR4A1 prevents it from phosphorylating and activating cytoplasmic AMPK. In terms of biological role, tumor suppressor serine/threonine-protein kinase that controls the activity of AMP-activated protein kinase (AMPK) family members, thereby playing a role in various processes such as cell metabolism, cell polarity, apoptosis and DNA damage response. Acts by phosphorylating the T-loop of AMPK family proteins, thus promoting their activity: phosphorylates PRKAA1, PRKAA2, BRSK1, BRSK2, MARK1, MARK2, MARK3, MARK4, NUAK1, NUAK2, SIK1, SIK2, SIK3 and SNRK but not MELK. Also phosphorylates non-AMPK family proteins such as STRADA, PTEN and possibly p53/TP53. Acts as a key upstream regulator of AMPK by mediating phosphorylation and activation of AMPK catalytic subunits PRKAA1 and PRKAA2 and thereby regulates processes including: inhibition of signaling pathways that promote cell growth and proliferation when energy levels are low, glucose homeostasis in liver, activation of autophagy when cells undergo nutrient deprivation, and B-cell differentiation in the germinal center in response to DNA damage. Also acts as a regulator of cellular polarity by remodeling the actin cytoskeleton. Required for cortical neuron polarization by mediating phosphorylation and activation of BRSK1 and BRSK2, leading to axon initiation and specification. Involved in DNA damage response: interacts with p53/TP53 and recruited to the CDKN1A/WAF1 promoter to participate in transcription activation. Able to phosphorylate p53/TP53; the relevance of such result in vivo is however unclear and phosphorylation may be indirect and mediated by downstream STK11/LKB1 kinase NUAK1. Also acts as a mediator of p53/TP53-dependent apoptosis via interaction with p53/TP53: translocates to the mitochondrion during apoptosis and regulates p53/TP53-dependent apoptosis pathways. Regulates UV radiation-induced DNA damage response mediated by CDKN1A. In association with NUAK1, phosphorylates CDKN1A in response to UV radiation and contributes to its degradation which is necessary for optimal DNA repair. Its function is as follows. Has a role in spermiogenesis. In Mus musculus (Mouse), this protein is Serine/threonine-protein kinase STK11.